Consider the following 60-residue polypeptide: Arabinogalactan protein 14 (60 aa).

A signal peptide spans 1 to 28; that stretch reads MEAMKMKLYVVVLVAVIAFSTVHQTVAA. Residues proline 32, proline 34, and proline 36 each carry the 4-hydroxyproline modification. Residues proline 32, proline 34, and proline 36 are each glycosylated (O-linked (Ara...) hydroxyproline). Serine 38 is lipidated: GPI-anchor amidated serine. A propeptide spans 39–60 (removed in mature form); sequence DASSFIPTFFASVAVMAFGFFF.

It belongs to the AG-peptide AGP family. Post-translationally, contains 4-hydroxyproline; hydroxylated on Pro-32, Pro-34 and Pro-36. O-glycosylated on hydroxyprolines; noncontiguous hydroxylproline residues are glycosylated with arabinogalactan.

Its subcellular location is the cell membrane. Functionally, proteoglycan that seems to be implicated in diverse developmental roles such as differentiation, cell-cell recognition, embryogenesis and programmed cell death. Involved in the regulation of root hair elongation. The sequence is that of Arabinogalactan protein 14 from Arabidopsis thaliana (Mouse-ear cress).